The chain runs to 165 residues: UPF0179 protein Igni_1272 (165 aa).

Belongs to the UPF0179 family.

The chain is UPF0179 protein Igni_1272 from Ignicoccus hospitalis (strain KIN4/I / DSM 18386 / JCM 14125).